Consider the following 481-residue polypeptide: Abietadienol/abietadienal oxidase (481 aa).

Residues 2–22 (ADQISLLLVVFTAAVALLHLI) form a helical membrane-spanning segment. C430 serves as a coordination point for heme.

The protein belongs to the cytochrome P450 family. Heme serves as cofactor. Expressed in young tissues such as flushing buds and green bark tissues. Lower levels in mature needles and bark.

The protein resides in the membrane. It carries out the reaction abieta-7,13-dien-18-ol + 2 reduced [NADPH--hemoprotein reductase] + 2 O2 = abieta-7,13-dien-18-oate + 2 oxidized [NADPH--hemoprotein reductase] + 3 H2O + 3 H(+). Functionally, multifunctional and multisubstrate cytochrome P450 that oxidizes the respective carbon 18 of abietadienol, abietadienal, levopimaradienol, isopimara-7,15-dienol, isopimara-7,15-dienal, dehydroabietadienol, and dehydroabietadienal. This chain is Abietadienol/abietadienal oxidase (CYP720B1), found in Pinus taeda (Loblolly pine).